The following is a 758-amino-acid chain: Dolichyl-phosphooligosaccharide-protein glycotransferase 2 (758 aa).

The Cytoplasmic portion of the chain corresponds to 1–6; the sequence is MKRRYS. A helical membrane pass occupies residues 7-27; the sequence is ILIILLVAIFYRMITFRFKYL. The Extracellular segment spans residues 28–92; that stretch reads LGYDPYFHLA…KVFGVSLTTT (65 aa). The short motif at 29–31 is the DXD motif 1 element; the sequence is GYD. Position 31 (D31) interacts with Mn(2+). Residues 93 to 113 traverse the membrane as a helical segment; sequence FKITPVIFGVLTVIFLYLSLL. The Cytoplasmic segment spans residues 114 to 120; sequence KLYDEKR. The helical transmembrane segment at 121-141 threads the bilayer; sequence AFFGGFFLAISYGHVFRSMAN. The Extracellular segment spans residues 142-145; the sequence is YYRG. The Mn(2+) site is built by R144 and D146. A DXD motif 2 motif is present at residues 144–146; that stretch reads RGD. The chain crosses the membrane as a helical span at residues 146 to 166; that stretch reads DNYMLFWYSVALLGISLALGI. Residues 167 to 175 are Cytoplasmic-facing; the sequence is KKGKWKYKR. Helical transmembrane passes span 176–196 and 197–217; these read LIFY…WQAY and YPIF…AFIL. At 218–226 the chain is on the cytoplasmic side; the sequence is KKDKYLLDS. A helical transmembrane segment spans residues 227-247; the sequence is IILILSTAFGVLLANYLGGIF. At 248 to 281 the chain is on the extracellular side; sequence GYGMLGYAKWLGKSVAKKLGLEFGYLKDVYLILH. The helical transmembrane segment at 282 to 302 threads the bilayer; it reads LKYLVPISLSFVLVLILLGFL. The Cytoplasmic segment spans residues 303–310; the sequence is TKDIRIRS. A helical membrane pass occupies residues 311 to 331; that stretch reads LFLGIASFIGIIILFKRFEAL. Over 332–352 the chain is Extracellular; it reads KELSTGFGIFKEAPILETQPT. Residues 340–343 carry the TIXE motif motif; sequence IFKE. Residues 353 to 373 form a helical membrane-spanning segment; the sequence is SFKDLWAAFSLSFFLTPLFFI. Over 374-379 the chain is Cytoplasmic; the sequence is RFKKPR. The helical transmembrane segment at 380 to 400 threads the bilayer; that stretch reads VEDFLTLGLIIPSVYMLKTWT. R401 is a topological domain (extracellular). Residue R401 participates in a glycophospholipid binding. The helical transmembrane segment at 402–422 threads the bilayer; it reads FLFIGSMAIAIMSGIGIVELY. Over 423-433 the chain is Cytoplasmic; sequence EAIKPRLNGKK. A helical membrane pass occupies residues 434–454; that stretch reads ALATGIITLVILPGVIAGLSF. Residues 455–758 are Extracellular-facing; it reads KEVCSLHPEM…DRGVFRLSYN (304 aa). An interacts with target acceptor peptide in protein substrate region spans residues 488–490; sequence WWD. The WWDYG motif motif lies at 488 to 492; that stretch reads WWDWG. The short motif at 540 to 547 is the DK motif element; the sequence is DFLKFGAI.

Belongs to the STT3 family. Mn(2+) serves as cofactor. It depends on Mg(2+) as a cofactor.

It is found in the cell membrane. It carries out the reaction an archaeal dolichyl phosphooligosaccharide + [protein]-L-asparagine = an archaeal dolichyl phosphate + a glycoprotein with the oligosaccharide chain attached by N-beta-D-glycosyl linkage to a protein L-asparagine.. It participates in protein modification; protein glycosylation. In terms of biological role, oligosaccharyl transferase (OST) that catalyzes the initial transfer of a defined glycan (ManNAcXyl(2)GlcAMan(2)GalNAc in Pyrococcus) from the lipid carrier dolichol-monophosphate to an asparagine residue within an Asn-X-Ser/Thr consensus motif in nascent polypeptide chains, the first step in protein N-glycosylation. The polypeptide is Dolichyl-phosphooligosaccharide-protein glycotransferase 2 (aglB2) (Pyrococcus horikoshii (strain ATCC 700860 / DSM 12428 / JCM 9974 / NBRC 100139 / OT-3)).